We begin with the raw amino-acid sequence, 249 residues long: Putative TrmH family tRNA/rRNA methyltransferase (249 aa).

G196, I216, and L225 together coordinate S-adenosyl-L-methionine.

The protein belongs to the class IV-like SAM-binding methyltransferase superfamily. RNA methyltransferase TrmH family.

The protein is Putative TrmH family tRNA/rRNA methyltransferase of Staphylococcus epidermidis (strain ATCC 35984 / DSM 28319 / BCRC 17069 / CCUG 31568 / BM 3577 / RP62A).